Here is a 376-residue protein sequence, read N- to C-terminus: Arsenite methyltransferase (376 aa).

Phosphoserine occurs at positions 47 and 336. Residues 354 to 363 (SDKMKPRHAP) show a composition bias toward basic and acidic residues. A disordered region spans residues 354–376 (SDKMKPRHAPEGTGGCCGKRKNC).

This sequence belongs to the methyltransferase superfamily. Arsenite methyltransferase family.

It is found in the cytoplasm. The protein localises to the cytosol. It carries out the reaction arsenic triglutathione + [thioredoxin]-dithiol + S-adenosyl-L-methionine + 2 H2O = methylarsonous acid + [thioredoxin]-disulfide + 3 glutathione + S-adenosyl-L-homocysteine + H(+). The enzyme catalyses arsenic triglutathione + 2 [thioredoxin]-dithiol + 2 S-adenosyl-L-methionine + H2O = dimethylarsinous acid + 2 [thioredoxin]-disulfide + 3 glutathione + 2 S-adenosyl-L-homocysteine + 2 H(+). The catalysed reaction is arsenic triglutathione + 3 [thioredoxin]-dithiol + 3 S-adenosyl-L-methionine = trimethylarsine + 3 [thioredoxin]-disulfide + 3 glutathione + 3 S-adenosyl-L-homocysteine + 3 H(+). In terms of biological role, catalyzes the transfer of a methyl group from AdoMet to trivalent arsenicals producing methylated and dimethylated arsenicals. It methylates arsenite to form methylarsonate, Me-AsO(3)H(2), which is reduced by methylarsonate reductase to methylarsonite, Me-As(OH)2. Methylarsonite is also a substrate and it is converted into the much less toxic compound dimethylarsinate (cacodylate), Me(2)As(O)-OH. The polypeptide is Arsenite methyltransferase (As3mt) (Mus musculus (Mouse)).